Reading from the N-terminus, the 146-residue chain is Transcriptional regulator MraZ (146 aa).

2 SpoVT-AbrB domains span residues 5–47 and 76–119; these read EYYH…TITD and SVQV…AKER.

It belongs to the MraZ family. As to quaternary structure, forms oligomers.

Its subcellular location is the cytoplasm. The protein localises to the nucleoid. The polypeptide is Transcriptional regulator MraZ (Dictyoglomus turgidum (strain DSM 6724 / Z-1310)).